Reading from the N-terminus, the 281-residue chain is Pantothenate synthetase (281 aa).

An ATP-binding site is contributed by 30-37 (MGYLHEGH). His-37 functions as the Proton donor in the catalytic mechanism. Gln-61 lines the (R)-pantoate pocket. Residue Gln-61 participates in beta-alanine binding. Residue 147–150 (GQKD) participates in ATP binding. (R)-pantoate is bound at residue Gln-153. ATP is bound by residues Val-176 and 184–187 (MSSR).

The protein belongs to the pantothenate synthetase family. As to quaternary structure, homodimer.

The protein localises to the cytoplasm. It carries out the reaction (R)-pantoate + beta-alanine + ATP = (R)-pantothenate + AMP + diphosphate + H(+). Its pathway is cofactor biosynthesis; (R)-pantothenate biosynthesis; (R)-pantothenate from (R)-pantoate and beta-alanine: step 1/1. Its function is as follows. Catalyzes the condensation of pantoate with beta-alanine in an ATP-dependent reaction via a pantoyl-adenylate intermediate. This Acetivibrio thermocellus (strain ATCC 27405 / DSM 1237 / JCM 9322 / NBRC 103400 / NCIMB 10682 / NRRL B-4536 / VPI 7372) (Clostridium thermocellum) protein is Pantothenate synthetase.